The following is a 156-amino-acid chain: Small ribosomal subunit protein uS7 (156 aa).

It belongs to the universal ribosomal protein uS7 family. Part of the 30S ribosomal subunit. Contacts proteins S9 and S11.

One of the primary rRNA binding proteins, it binds directly to 16S rRNA where it nucleates assembly of the head domain of the 30S subunit. Is located at the subunit interface close to the decoding center, probably blocks exit of the E-site tRNA. The sequence is that of Small ribosomal subunit protein uS7 from Desulfovibrio desulfuricans (strain ATCC 27774 / DSM 6949 / MB).